Consider the following 303-residue polypeptide: UDP-3-O-acyl-N-acetylglucosamine deacetylase (303 aa).

The Zn(2+) site is built by His-78, His-237, and Asp-241. His-264 acts as the Proton donor in catalysis.

This sequence belongs to the LpxC family. The cofactor is Zn(2+).

It catalyses the reaction a UDP-3-O-[(3R)-3-hydroxyacyl]-N-acetyl-alpha-D-glucosamine + H2O = a UDP-3-O-[(3R)-3-hydroxyacyl]-alpha-D-glucosamine + acetate. It functions in the pathway glycolipid biosynthesis; lipid IV(A) biosynthesis; lipid IV(A) from (3R)-3-hydroxytetradecanoyl-[acyl-carrier-protein] and UDP-N-acetyl-alpha-D-glucosamine: step 2/6. Catalyzes the hydrolysis of UDP-3-O-myristoyl-N-acetylglucosamine to form UDP-3-O-myristoylglucosamine and acetate, the committed step in lipid A biosynthesis. The polypeptide is UDP-3-O-acyl-N-acetylglucosamine deacetylase (Stenotrophomonas maltophilia (strain K279a)).